Here is a 447-residue protein sequence, read N- to C-terminus: Elongation factor 1-alpha (447 aa).

Positions 5–230 (KIHISIVVIG…DQISEPKRPS (226 aa)) constitute a tr-type G domain. The interval 14 to 21 (GHVDSGKS) is G1. A GTP-binding site is contributed by 14–21 (GHVDSGKS). Residue Lys55 is modified to N6,N6-dimethyllysine. The segment at 70–74 (GITID) is G2. Lys79 carries the N6,N6,N6-trimethyllysine modification. The interval 91 to 94 (DAPG) is G3. GTP-binding positions include 91–95 (DAPGH) and 153–156 (NKMD). The G4 stretch occupies residues 153–156 (NKMD). Position 187 is an N6,N6,N6-trimethyllysine (Lys187). The interval 194-196 (SGF) is G5. Position 261 is an N6-methyllysine (Lys261). At Glu289 the chain carries 5-glutamyl glycerylphosphorylethanolamine. N6,N6,N6-trimethyllysine is present on Lys306. The residue at position 362 (Glu362) is a 5-glutamyl glycerylphosphorylethanolamine. Lys396 carries the post-translational modification N6,N6,N6-trimethyllysine.

The protein belongs to the TRAFAC class translation factor GTPase superfamily. Classic translation factor GTPase family. EF-Tu/EF-1A subfamily.

It is found in the cytoplasm. This protein promotes the GTP-dependent binding of aminoacyl-tRNA to the A-site of ribosomes during protein biosynthesis. This is Elongation factor 1-alpha from Daucus carota (Wild carrot).